A 305-amino-acid polypeptide reads, in one-letter code: Oxygen-dependent coproporphyrinogen-III oxidase (305 aa).

A substrate-binding site is contributed by Ser93. A divalent metal cation contacts are provided by His97 and His107. His107 (proton donor) is an active-site residue. 109 to 111 is a binding site for substrate; sequence NVR. Residues His146 and His176 each contribute to the a divalent metal cation site. The segment at 241-276 is important for dimerization; that stretch reads YVEFNLVFDRGTLFGLQSGGRTESILMSLPPQVRWG. Substrate is bound at residue 259–261; it reads GGR.

This sequence belongs to the aerobic coproporphyrinogen-III oxidase family. As to quaternary structure, homodimer. A divalent metal cation serves as cofactor.

It localises to the cytoplasm. The enzyme catalyses coproporphyrinogen III + O2 + 2 H(+) = protoporphyrinogen IX + 2 CO2 + 2 H2O. It functions in the pathway porphyrin-containing compound metabolism; protoporphyrin-IX biosynthesis; protoporphyrinogen-IX from coproporphyrinogen-III (O2 route): step 1/1. Involved in the heme biosynthesis. Catalyzes the aerobic oxidative decarboxylation of propionate groups of rings A and B of coproporphyrinogen-III to yield the vinyl groups in protoporphyrinogen-IX. This Pseudomonas aeruginosa (strain LESB58) protein is Oxygen-dependent coproporphyrinogen-III oxidase.